Reading from the N-terminus, the 684-residue chain is MSGRQRSVAAAVHHQRQLSDNPLDMSSSNGRWLQSTGLQHFQSSANDYGYYAGGQGGGGQAARGYQNAQRGNEFFGEPTTPQYGARPTNQRKNNDESEFSPGLLDLHSFDTELLPEIPVSNQLDGPSLFNPSQGQSFDDFEAYNKQPNRSRVLAENLAAEKERMNAVAKIKVVVRKRPLNKKESTKNEEDIVDTHANCLTVHETKLKVDLTAYVEKHEFVFDAVLDEEVSNDEVYRETVEPVVPLIFQRIKATCFAYGQTGSGKTYTMKPLPLKASRDILRLMHHTYRNQGFQLFVSFFEIYGGKLYDLLSERKKLCMREDGKQQVCIVGLQEYRVSDTDAIMELIERGSATRSTGTTGANEESSRSHAILQLAIKKSVEGNQSKPPRLVGKLSFIDLAGSERGADTTDNDKQTRLEGAEINKSLLALKECIRALDNDQGHIPFRGSKLTEVLRDSFMGNSRTVMISCISPSSGSCEHTLNTLRYADRVKSLSKGNASKKDVSSSTMNLRESTKIPLSSALPTPSNFDDDVNEMWTEENDEFDASDYEQDKQMWKKNGKLEPSYNGMAQERIPKPTIQMKSRDMPRPDMKKSNSDDNLNALLQEEEDLVNAHRKQVEDTMNIVKEEMNLLVEADQPGNQLDGYISRLNTILSQKAAGILQLQNRLAHFQKRLREHNVLVSTTGY.

Disordered regions lie at residues 1–31 and 71–103; these read MSGR…SNGR and GNEF…SPGL. Composition is skewed to polar residues over residues 18 to 31 and 79 to 91; these read LSDN…SNGR and TTPQ…TNQR. The Kinesin motor domain occupies 169 to 492; it reads KIKVVVRKRP…LRYADRVKSL (324 aa). 258–265 is an ATP binding site; sequence GQTGSGKT. Positions 574 to 594 are disordered; that stretch reads KPTIQMKSRDMPRPDMKKSNS. Over residues 580-594 the composition is skewed to basic and acidic residues; the sequence is KSRDMPRPDMKKSNS. Residues 596–626 adopt a coiled-coil conformation; that stretch reads DNLNALLQEEEDLVNAHRKQVEDTMNIVKEE.

It belongs to the TRAFAC class myosin-kinesin ATPase superfamily. Kinesin family. KIN-13 subfamily.

In terms of biological role, acts redundantly with KIN13A to modulate cell wall synthesis and cell expansion via the THE1 pathway. The chain is Kinesin-like protein KIN-13B from Arabidopsis thaliana (Mouse-ear cress).